The following is a 489-amino-acid chain: Probable cytochrome P450 522A1 (489 aa).

The chain crosses the membrane as a helical span at residues 1–21; that stretch reads MILTIVIIILTVIFVNKYLLN. Cys433 is a binding site for heme.

The protein belongs to the cytochrome P450 family. It depends on heme as a cofactor.

Its subcellular location is the membrane. This chain is Probable cytochrome P450 522A1 (cyp522A1), found in Dictyostelium discoideum (Social amoeba).